A 307-amino-acid chain; its full sequence is UDP-3-O-acyl-N-acetylglucosamine deacetylase (307 aa).

Positions 78, 241, and 245 each coordinate Zn(2+). Residue His-268 is the Proton donor of the active site.

It belongs to the LpxC family. It depends on Zn(2+) as a cofactor.

It carries out the reaction a UDP-3-O-[(3R)-3-hydroxyacyl]-N-acetyl-alpha-D-glucosamine + H2O = a UDP-3-O-[(3R)-3-hydroxyacyl]-alpha-D-glucosamine + acetate. Its pathway is glycolipid biosynthesis; lipid IV(A) biosynthesis; lipid IV(A) from (3R)-3-hydroxytetradecanoyl-[acyl-carrier-protein] and UDP-N-acetyl-alpha-D-glucosamine: step 2/6. Catalyzes the hydrolysis of UDP-3-O-myristoyl-N-acetylglucosamine to form UDP-3-O-myristoylglucosamine and acetate, the committed step in lipid A biosynthesis. This chain is UDP-3-O-acyl-N-acetylglucosamine deacetylase, found in Bordetella avium (strain 197N).